Reading from the N-terminus, the 334-residue chain is Spermatogenesis-associated protein 32 (334 aa).

The disordered stretch occupies residues 24–98; that stretch reads SDHHRHHHHH…TESPEQQNYR (75 aa). Positions 37 to 47 are enriched in acidic residues; that stretch reads ENEDEDTEVEA. A compositionally biased stretch (basic and acidic residues) spans 48–60; the sequence is ELPRTEPPPKVDP. The span at 77–98 shows a compositional bias: polar residues; sequence SKTTPETEGDSYTESPEQQNYR. S135 and S138 each carry phosphoserine.

As to quaternary structure, interacts with syntaxin-1 and ACTB. Highly expressed in the testis and weakly in the brain and heart.

The polypeptide is Spermatogenesis-associated protein 32 (Spata32) (Mus musculus (Mouse)).